We begin with the raw amino-acid sequence, 457 residues long: GTPase Era, mitochondrial (457 aa).

The N-terminal 18 residues, 1–18 (MAFRVSISTFGKSLRVRR), are a transit peptide targeting the mitochondrion. In terms of domain architecture, Era-type G spans 107-350 (KVLRVAIIGA…RYLVVGAKPG (244 aa)). The tract at residues 115-122 (GAPNAGKS) is G1. 115–122 (GAPNAGKS) lines the GTP pocket. The interval 141–145 (HTTRA) is G2. Residues 162–165 (DTPG) form a G3 region. Residues 162 to 166 (DTPGL) and 231 to 234 (NKVD) contribute to the GTP site. Residues 231 to 234 (NKVD) are G4. Positions 270–290 (AERRTDREARTSGSGDEEKPG) are enriched in basic and acidic residues. Positions 270-300 (AERRTDREARTSGSGDEEKPGGDVADGEGSE) are disordered. Positions 328–330 (VSA) are G5. Residues 376–457 (LLEYLPKEVP…KLRLSVKVKN (82 aa)) form the KH type-2 domain.

The protein belongs to the TRAFAC class TrmE-Era-EngA-EngB-Septin-like GTPase superfamily. Era GTPase family.

Its subcellular location is the mitochondrion matrix. It is found in the mitochondrion inner membrane. In terms of biological role, probable GTPase that plays a role in the mitochondrial ribosomal small subunit assembly. Specifically binds the 12S mitochondrial rRNA (12S mt-rRNA) to a 33 nucleotide section delineating the 3' terminal stem-loop region. May act as a chaperone that protects the 12S mt-rRNA on the 28S mitoribosomal subunit during ribosomal small subunit assembly. The sequence is that of GTPase Era, mitochondrial (eral1) from Salmo salar (Atlantic salmon).